The chain runs to 1186 residues: Atrophin-1 (1186 aa).

3 disordered regions span residues 1–604 (MKTR…PTVT), 618–763 (ASSP…ARFN), and 781–858 (VPLE…HRPP). A Nuclear localization signal motif is present at residues 16 to 32 (RKKEAPGPREELRSRGR). Positions 17-29 (KKEAPGPREELRS) are enriched in basic and acidic residues. The residue at position 34 (S34) is a Phosphoserine. A compositionally biased stretch (basic and acidic residues) spans 45–63 (GKAEKSRQTAKKARVEEAS). Phosphoserine is present on residues S77, S79, S100, S102, and S106. Basic and acidic residues predominate over residues 107 to 127 (LDGRSLNDDGSSDPRDIDQDN). Residues 128–151 (RSTSPSIYSPGSVENDSDSSSGLS) show a composition bias toward polar residues. Residues 157-173 (PYHPPPLFPPSPQPPDS) are compositionally biased toward pro residues. Low complexity-rich tracts occupy residues 258 to 270 (PISV…SGAP), 349 to 365 (PTLA…SSSA), and 375 to 396 (SSSS…SSAS). The span at 416 to 437 (SLSVSNQPPKYTQPSLPSQAVW) shows a compositional bias: polar residues. Positions 484–503 (QQQQQQQQQQQQQQQHHGNS) are enriched in low complexity. Residues 513 to 563 (HPLEGGSSHHAHPYAMSPSLGSLRPYPPGPAHLPPPHSQVSYSQAGPNGPP) form an involved in binding BAIAP2 region. The span at 537–549 (PYPPGPAHLPPPH) shows a compositional bias: pro residues. Composition is skewed to low complexity over residues 565-582 (SSSS…YPCS) and 618-628 (ASSPAGYKTAS). S628 bears the Phosphoserine mark. The residue at position 637 (K637) is an N6-acetyllysine. Position 649 is a phosphothreonine (T649). S657 is modified (phosphoserine). Position 665 is a phosphothreonine (T665). 2 stretches are compositionally biased toward pro residues: residues 689 to 714 (GPGP…PASG) and 735 to 748 (SPVP…PPPK). At S735 the chain carries Phosphoserine; by MAPK8. Residues S742 and S744 each carry the phosphoserine modification. The span at 791–835 (KRADLVEKVRREAEQRAREEKEREREREREKEREREKERELERSV) shows a compositional bias: basic and acidic residues. The tract at residues 875-890 (DTPALRTLSEYARPHV) is required for interaction with FAT1. S892 is subject to Phosphoserine. The short motif at 1029–1037 (ALGNDPLAR) is the Nuclear export signal element. An Asymmetric dimethylarginine modification is found at R1111. Residue K1179 forms a Glycyl lysine isopeptide (Lys-Gly) (interchain with G-Cter in SUMO2) linkage.

In terms of assembly, interacts with NR2E1; the interaction represses the transcriptional activity of NR2E1. Interacts with BAIAP2, WWP1, WWP2, WWP3 and RERE. Interacts (via its N-terminus) with MTG8; the interaction enhances transcriptional repression of MTG8. Interacts with FAT1 (via a C-terminal domain). Interacts with PQBP1. Phosphorylated in vitro by MAPK8/JNK1 on Ser-735.

The protein resides in the nucleus. Its subcellular location is the cytoplasm. It is found in the perinuclear region. The protein localises to the cell junction. Transcriptional corepressor. Corepressor of MTG8 transcriptional repression. Recruits NR2E1 to repress transcription. Has some intrinsic repression activity. Promotes vascular smooth cell (VSMC) migration and orientation. The chain is Atrophin-1 (ATN1) from Pan troglodytes (Chimpanzee).